The sequence spans 181 residues: uncharacterized protein (181 aa).

A disordered region spans residues Ser-126–Gln-148. The span at Glu-131–Asp-144 shows a compositional bias: acidic residues.

Belongs to the chlamydial CPn_0422/CT_273/TC_0545 family.

This is an uncharacterized protein from Chlamydia pneumoniae (Chlamydophila pneumoniae).